The primary structure comprises 152 residues: Sorting nexin-3 (152 aa).

Positions 30 to 147 constitute a PX domain; that stretch reads NFLEIEVRSP…CAFIQDPQWD (118 aa). A 1,2-diacyl-sn-glycero-3-phospho-(1D-myo-inositol-3-phosphate)-binding residues include R73, S75, K99, R104, and R113.

This sequence belongs to the sorting nexin family.

It localises to the cytoplasm. The protein resides in the golgi apparatus membrane. The protein localises to the prevacuolar compartment membrane. Required for retention of late Golgi membrane proteins. Component of the retrieval machinery that functions by direct interaction with the cytosolic tails of certain TGN membrane proteins during the sorting/budding process at the prevacuolar compartment. Binds phosphatidylinositol 3-phosphate (PtdIns(P3)). The protein is Sorting nexin-3 (SNX3) of Yarrowia lipolytica (strain CLIB 122 / E 150) (Yeast).